Reading from the N-terminus, the 363-residue chain is 24-methylenesterol C-methyltransferase 2 (363 aa).

Residues 6–26 (MAWTAAGVGMALVYWFVWVMG) form a helical membrane-spanning segment.

Belongs to the class I-like SAM-binding methyltransferase superfamily. Erg6/SMT family.

The protein localises to the membrane. The enzyme catalyses 24-methylidenelophenol + S-adenosyl-L-methionine = (Z)-24-ethylidenelophenol + S-adenosyl-L-homocysteine + H(+). It participates in steroid biosynthesis; sterol biosynthesis. Catalyzes the methyl transfer from S-adenosyl-methionine to the methylene group of 24-methylene lophenol to form 24-ethylidene lophenol. This Oryza sativa subsp. japonica (Rice) protein is 24-methylenesterol C-methyltransferase 2 (Smt2-1).